A 340-amino-acid polypeptide reads, in one-letter code: Adenosine kinase (340 aa).

D293 is a catalytic residue.

The protein belongs to the carbohydrate kinase PfkB family. Mg(2+) serves as cofactor.

It catalyses the reaction adenosine + ATP = AMP + ADP + H(+). It functions in the pathway purine metabolism; AMP biosynthesis via salvage pathway; AMP from adenosine: step 1/1. Functionally, ATP dependent phosphorylation of adenosine and other related nucleoside analogs to monophosphate derivatives. ADO1 does not play a major role in adenine utilization in yeast. Its physiological role could primarily be to recycle adenosine produced by the methyl cycle. This is Adenosine kinase from Saccharomyces cerevisiae (strain ATCC 204508 / S288c) (Baker's yeast).